The chain runs to 293 residues: Large ribosomal subunit protein uL2c (293 aa).

Residues Val-224–Arg-245 form a disordered region.

It belongs to the universal ribosomal protein uL2 family. As to quaternary structure, part of the 50S ribosomal subunit.

Its subcellular location is the plastid. The protein resides in the chloroplast. The protein is Large ribosomal subunit protein uL2c (rpl2) of Pyropia yezoensis (Susabi-nori).